The primary structure comprises 144 residues: Large ribosomal subunit protein uL15 (144 aa).

Positions 1–56 (MELNTLAPAPGAKSSKKRVGRGIGSGLGKTGGRGHKGQKSRSGGSVKPGFEGGQMP) are disordered. The segment covering 21-31 (RGIGSGLGKTG) has biased composition (gly residues).

It belongs to the universal ribosomal protein uL15 family. Part of the 50S ribosomal subunit.

Its function is as follows. Binds to the 23S rRNA. This is Large ribosomal subunit protein uL15 from Idiomarina loihiensis (strain ATCC BAA-735 / DSM 15497 / L2-TR).